Here is a 525-residue protein sequence, read N- to C-terminus: GMP synthase [glutamine-hydrolyzing] (525 aa).

The Glutamine amidotransferase type-1 domain maps to 16 to 205; it reads PVLVVDFGAQ…LHDFAGIGAR (190 aa). Catalysis depends on C93, which acts as the Nucleophile. Active-site residues include H179 and E181. The GMPS ATP-PPase domain maps to 206–399; it reads WTPANIANAL…LGLPEEIVAR (194 aa). 233–239 serves as a coordination point for ATP; the sequence is SGGVDSA.

In terms of assembly, homodimer.

The catalysed reaction is XMP + L-glutamine + ATP + H2O = GMP + L-glutamate + AMP + diphosphate + 2 H(+). It functions in the pathway purine metabolism; GMP biosynthesis; GMP from XMP (L-Gln route): step 1/1. Functionally, catalyzes the synthesis of GMP from XMP. In Mycobacterium marinum (strain ATCC BAA-535 / M), this protein is GMP synthase [glutamine-hydrolyzing].